Here is a 93-residue protein sequence, read N- to C-terminus: Cobalt transport protein CbiN (93 aa).

The next 2 membrane-spanning stretches (helical) occupy residues 5–25 (LILLAMVAALMILPFFINHGG) and 63–83 (LLFTLQGSLGAAVIFYILGYA).

Belongs to the CbiN family. As to quaternary structure, forms an energy-coupling factor (ECF) transporter complex composed of an ATP-binding protein (A component, CbiO), a transmembrane protein (T component, CbiQ) and 2 possible substrate-capture proteins (S components, CbiM and CbiN) of unknown stoichimetry.

The protein localises to the cell inner membrane. The protein operates within cofactor biosynthesis; adenosylcobalamin biosynthesis. Functionally, part of the energy-coupling factor (ECF) transporter complex CbiMNOQ involved in cobalt import. In Klebsiella pneumoniae subsp. pneumoniae (strain ATCC 700721 / MGH 78578), this protein is Cobalt transport protein CbiN.